The primary structure comprises 311 residues: 4-diphosphocytidyl-2-C-methyl-D-erythritol kinase (311 aa).

Residue lysine 16 is part of the active site. 100–110 (PIGAGLAGGSS) contacts ATP. Aspartate 142 is a catalytic residue.

This sequence belongs to the GHMP kinase family. IspE subfamily.

It carries out the reaction 4-CDP-2-C-methyl-D-erythritol + ATP = 4-CDP-2-C-methyl-D-erythritol 2-phosphate + ADP + H(+). The protein operates within isoprenoid biosynthesis; isopentenyl diphosphate biosynthesis via DXP pathway; isopentenyl diphosphate from 1-deoxy-D-xylulose 5-phosphate: step 3/6. Functionally, catalyzes the phosphorylation of the position 2 hydroxy group of 4-diphosphocytidyl-2C-methyl-D-erythritol. This chain is 4-diphosphocytidyl-2-C-methyl-D-erythritol kinase, found in Prochlorococcus marinus (strain MIT 9312).